A 25-amino-acid polypeptide reads, in one-letter code: Caerin 2.1 (25 aa).

In terms of tissue distribution, expressed by the skin dorsal glands.

The protein localises to the secreted. Its function is as follows. Antibacterial peptide with narrow spectrum of activity. Active against the Gram-negative bacterium P.multocida (MIC=25 ug/ml). Inhibits the formation of NO by neuronal nitric oxide synthase with an IC(50) of 9 ug/ml. The polypeptide is Caerin 2.1 (Litoria peronii (Emerald spotted tree frog)).